Reading from the N-terminus, the 127-residue chain is Protein chibby homolog 1 (127 aa).

The interval 1–25 is disordered; sequence MPLFGSIFSPKKTPPRKSASLSNLH. 2 positions are modified to phosphoserine: serine 9 and serine 20. Residues 60 to 112 form a minimal region for the interaction with PKD2 region; sequence VADSVISGGVDRRETQRLRKRNQQLEEENNLLRLKVDILLDMLSETTAESHLK. Residues 68-110 adopt a coiled-coil conformation; the sequence is GVDRRETQRLRKRNQQLEEENNLLRLKVDILLDMLSETTAESH. The segment at 77–98 is leucine-zipper; mediates homodimerization; that stretch reads LRKRNQQLEEENNLLRLKVDIL.

It belongs to the chibby family. Homodimer. Homodimerization is essential for nuclear localization and interaction with KPNA4 but is dispensable for interaction with CTNNB1. Interacts with polycystin-2/PKD2 and GM130. Interacts with the C-terminal region of CTNNB1. Interacts (C-terminus) with TCIM (C-terminus), TCIM competes with CTNNB1 for the interaction with CBY1. Interacts with FAM92A; this interaction facilitates targeting of FAM92A to cilium basal body. Interacts with CIBAR2. Interacts with KPNA4. As to expression, found in heart, brain, lung, liver, muscle, kidney and testis. Levels are approximately 3-fold higher in embryonic and adult heart than in lung or liver.

It localises to the nucleus speckle. The protein localises to the cytoplasm. The protein resides in the cytoskeleton. It is found in the cilium basal body. Its subcellular location is the microtubule organizing center. It localises to the centrosome. The protein localises to the centriole. The protein resides in the golgi apparatus. It is found in the trans-Golgi network. Its subcellular location is the cell projection. It localises to the cilium. The protein localises to the flagellum. The protein resides in the nucleus. In terms of biological role, inhibits the Wnt/Wingless pathway by binding to CTNNB1/beta-catenin and inhibiting beta-catenin-mediated transcriptional activation through competition with TCF/LEF transcription factors. Has also been shown to play a role in regulating the intracellular trafficking of polycystin-2/PKD2 and possibly of other intracellular proteins. Promotes adipocyte and cardiomyocyte differentiation. The polypeptide is Protein chibby homolog 1 (Cby1) (Mus musculus (Mouse)).